The following is a 99-amino-acid chain: Putative protein YgeP (99 aa).

The sequence is that of Putative protein YgeP (ygeP) from Escherichia coli (strain K12).